We begin with the raw amino-acid sequence, 452 residues long: tRNA modification GTPase MnmE (452 aa).

(6S)-5-formyl-5,6,7,8-tetrahydrofolate contacts are provided by R21, E78, and K118. The TrmE-type G domain maps to 214 to 375 (GMKVVIAGRP…LREHLKQAMG (162 aa)). N224 lines the K(+) pocket. Residues 224–229 (NAGKSS), 243–249 (TDIAGTT), and 268–271 (DTAG) contribute to the GTP site. A Mg(2+)-binding site is contributed by S228. Residues T243, I245, and T248 each contribute to the K(+) site. T249 provides a ligand contact to Mg(2+). K452 lines the (6S)-5-formyl-5,6,7,8-tetrahydrofolate pocket.

It belongs to the TRAFAC class TrmE-Era-EngA-EngB-Septin-like GTPase superfamily. TrmE GTPase family. As to quaternary structure, homodimer. Heterotetramer of two MnmE and two MnmG subunits. K(+) serves as cofactor.

It localises to the cytoplasm. Exhibits a very high intrinsic GTPase hydrolysis rate. Involved in the addition of a carboxymethylaminomethyl (cmnm) group at the wobble position (U34) of certain tRNAs, forming tRNA-cmnm(5)s(2)U34. The chain is tRNA modification GTPase MnmE from Haemophilus influenzae (strain PittEE).